Reading from the N-terminus, the 314-residue chain is Cytochrome c biogenesis protein CcsA (314 aa).

8 consecutive transmembrane segments (helical) span residues 15 to 35 (VSFIGILIFYFLLINLPISLI), 48 to 68 (LITILINLFIALQLISRWIIS), 73 to 93 (ISNLYESLYFLVWGITLGQLL), 102 to 122 (IIPAIAIPIELLTIAFACFVL), 148 to 168 (VMLSYAALIMGSLLSASVLFI), 216 to 236 (SILVGFVLLTLGLITGAIWAN), 250 to 267 (TWAFISWLFYAAYLHMRI), and 277 to 297 (ALLATSGFFVVLICYIGVNFL).

This sequence belongs to the CcmF/CycK/Ccl1/NrfE/CcsA family. In terms of assembly, may interact with ccs1.

Its subcellular location is the cellular thylakoid membrane. Required during biogenesis of c-type cytochromes (cytochrome c6 and cytochrome f) at the step of heme attachment. The chain is Cytochrome c biogenesis protein CcsA from Prochlorococcus marinus subsp. pastoris (strain CCMP1986 / NIES-2087 / MED4).